A 246-amino-acid polypeptide reads, in one-letter code: tRNA (guanine-N(7)-)-methyltransferase (246 aa).

The S-adenosyl-L-methionine site is built by Glu76, Glu101, Asp128, and Asp151. Asp151 is a catalytic residue. Residue Lys155 coordinates substrate. The segment at 157 to 162 is interaction with RNA; it reads RHNKRR. Substrate is bound by residues Asp187 and 222 to 225; that span reads TKFE.

The protein belongs to the class I-like SAM-binding methyltransferase superfamily. TrmB family.

The enzyme catalyses guanosine(46) in tRNA + S-adenosyl-L-methionine = N(7)-methylguanosine(46) in tRNA + S-adenosyl-L-homocysteine. It functions in the pathway tRNA modification; N(7)-methylguanine-tRNA biosynthesis. In terms of biological role, catalyzes the formation of N(7)-methylguanine at position 46 (m7G46) in tRNA. This Dechloromonas aromatica (strain RCB) protein is tRNA (guanine-N(7)-)-methyltransferase.